The chain runs to 167 residues: Iron-sulfur cluster assembly enzyme ISCU (167 aa).

The transit peptide at 1–34 (MAAAGAFRLRRAASALLLRSPRLPARELSAPARL) directs the protein to the mitochondrion. At serine 14 the chain carries Phosphoserine; by MTOR. Residue proline 46 participates in Zn(2+) binding. Cysteine 69 functions as the Cysteine persulfide intermediate in the catalytic mechanism. Position 69 is a cysteine persulfide (cysteine 69). Positions 70, 71, 95, 112, and 138 each coordinate Zn(2+). The Cysteine persulfide intermediate role is filled by cysteine 138. Cysteine 138 is modified (cysteine persulfide).

The protein belongs to the NifU family. As to quaternary structure, homodimer; Tyr-35-mediated dimerization of two iron- and sulfide-containing ISCU subunit bind to the cysteine desulfurase complex. Component of the mitochondrial core iron-sulfur cluster (ISC) complex composed of NFS1, LYRM4, NDUFAB1, ISCU, FXN, and FDX2; this complex is an heterohexamer containing two copies of each monomer. Interacts (D-state) with NFS1 (homodimer form); each monomer interacts with the C-terminal regions of each NFS1 monomer. Interacts (monomer form) with FXN (via ferrous form); the interaction is possible when both are bound to the dimeric form of the cysteine desulfurase complex (NFS1:LYRM4) and enhances FXN interaction to the dimeric form of the cysteine desulfurase complex (NFS1:LYRM4). Interacts with GLRX5. Interacts (D-state) with HSPA9. Interacts (S-state) with HSCB; this interaction stimulates the ATPase activity of HSPA9. In terms of assembly, component of the cytoplasmic core iron-sulfur cluster (ISC) complex composed at least of NFS1, LYRM4, and ISCU; this complex interacts with FXN. Monomer; each monomer binds to the C-terminal regions of NFS1 (cytoplasmic and homodimer form). Interacts with NFS1 (cytoplasmic and homodimer form); this interaction promotes de novo iron-sulfur cluster formation. Interacts with HSCB (cytoplasmic form); this interaction stabilizes the (Fe-S) clusters on ISCU. In terms of processing, phosphorylation at Ser-14 is required for ISCU protein stabilization in the cytosol, whereas dephosphorylation of Ser-14, due to the inhibition of mTORC1 (mammalian target of rapamycin complex 1) complex, leads to degradation of the precursor form and ultimately to a decrease in the mitochondrial mature form. Post-translationally, cysteine persulfide is reduced by thiol-containing molecules such as glutathione and L-cysteine. Detected in heart, liver, skeletal muscle, brain, pancreas, kidney, lung and placenta.

The protein localises to the mitochondrion. It is found in the cytoplasm. Its subcellular location is the nucleus. In terms of biological role, mitochondrial scaffold protein, of the core iron-sulfur cluster (ISC) assembly complex, that provides the structural architecture on which the [2Fe-2S] clusters are assembled. The core iron-sulfur cluster (ISC) assembly complex is involved in the de novo synthesis of a [2Fe-2S] cluster, the first step of the mitochondrial iron-sulfur protein biogenesis. This process is initiated by the cysteine desulfurase complex (NFS1:LYRM4:NDUFAB1) that produces persulfide which is delivered on the scaffold protein ISCU in a FXN-dependent manner. Then this complex is stabilized by FDX2 which provides reducing equivalents to accomplish the [2Fe-2S] cluster assembly. Finally, the [2Fe-2S] cluster is transferred from ISCU to chaperone proteins, including HSCB, HSPA9 and GLRX5. Exists as two slow interchanging conformational states, a structured (S) and disordered (D) form. May modulate NFS1 desulfurase activity in a zinc-dependent manner. Modulates the interaction between FXN and the cysteine desulfurase complex. Its function is as follows. Cytoplasmic scaffold protein, of the cytoplasmic core iron-sulfur cluster (ISC) assembly complex that provides the structural architecture on which the Fe-S clusters are assembled and may be involved in the cytoplasmic iron-sulfur protein biogenesis. The polypeptide is Iron-sulfur cluster assembly enzyme ISCU (Homo sapiens (Human)).